Here is a 213-residue protein sequence, read N- to C-terminus: MSADIRFDSLKTIVPAVSRETADRLIAFEDLFRKWSKAINLASPSTLADLWNRHILDSAQLFPLAKEATRWLDIGSGGGFPGIVTACFLAERSGGCIDLVESAGKKAAFLRTAAGHLYVPARVHSARIESMWEKIETPQVVTARALASLGDLFTLAEPWLSDGAKALFQKGRDYQREIDESRVGWSFDLVKHPSAIDQASVILEISNLRRKTD.

S-adenosyl-L-methionine-binding positions include G75, F80, I128 to E129, and R144.

It belongs to the methyltransferase superfamily. RNA methyltransferase RsmG family.

It localises to the cytoplasm. The enzyme catalyses guanosine(527) in 16S rRNA + S-adenosyl-L-methionine = N(7)-methylguanosine(527) in 16S rRNA + S-adenosyl-L-homocysteine. Specifically methylates the N7 position of guanine in position 527 of 16S rRNA. The sequence is that of Ribosomal RNA small subunit methyltransferase G from Brucella suis biovar 1 (strain 1330).